Here is a 119-residue protein sequence, read N- to C-terminus: Large ribosomal subunit protein bL20 (119 aa).

Belongs to the bacterial ribosomal protein bL20 family.

In terms of biological role, binds directly to 23S ribosomal RNA and is necessary for the in vitro assembly process of the 50S ribosomal subunit. It is not involved in the protein synthesizing functions of that subunit. The sequence is that of Large ribosomal subunit protein bL20 from Burkholderia ambifaria (strain MC40-6).